The following is a 320-amino-acid chain: Nod factor export ATP-binding protein I (320 aa).

An ABC transporter domain is found at 15–245 (VSATGVWKKR…LGALKILEID (231 aa)). 47–54 (GTNGAGKS) provides a ligand contact to ATP.

The protein belongs to the ABC transporter superfamily. Lipooligosaccharide exporter (TC 3.A.1.102) family. The complex is composed of two ATP-binding proteins (NodI) and two transmembrane proteins (NodJ).

The protein resides in the cell inner membrane. Its function is as follows. Part of the ABC transporter complex NodIJ involved in the export of the nodulation factors (Nod factors), the bacterial signal molecules that induce symbiosis and subsequent nodulation induction. Nod factors are LCO (lipo-chitin oligosaccharide), a modified beta-1,4-linked N-acetylglucosamine oligosaccharide. This subunit is responsible for energy coupling to the transport system. In Azorhizobium caulinodans (strain ATCC 43989 / DSM 5975 / JCM 20966 / LMG 6465 / NBRC 14845 / NCIMB 13405 / ORS 571), this protein is Nod factor export ATP-binding protein I.